Reading from the N-terminus, the 193-residue chain is NADH-quinone oxidoreductase subunit B (193 aa).

[4Fe-4S] cluster-binding residues include Cys49, Cys50, Cys115, and Cys144. The disordered stretch occupies residues 172-193 (FKKEEPREANAPVPVNTEMPLE).

Belongs to the complex I 20 kDa subunit family. As to quaternary structure, NDH-1 is composed of 14 different subunits. Subunits NuoB, C, D, E, F, and G constitute the peripheral sector of the complex. The cofactor is [4Fe-4S] cluster.

The protein localises to the cell inner membrane. The catalysed reaction is a quinone + NADH + 5 H(+)(in) = a quinol + NAD(+) + 4 H(+)(out). Functionally, NDH-1 shuttles electrons from NADH, via FMN and iron-sulfur (Fe-S) centers, to quinones in the respiratory chain. The immediate electron acceptor for the enzyme in this species is believed to be ubiquinone. Couples the redox reaction to proton translocation (for every two electrons transferred, four hydrogen ions are translocated across the cytoplasmic membrane), and thus conserves the redox energy in a proton gradient. This is NADH-quinone oxidoreductase subunit B from Akkermansia muciniphila (strain ATCC BAA-835 / DSM 22959 / JCM 33894 / BCRC 81048 / CCUG 64013 / CIP 107961 / Muc).